The primary structure comprises 131 residues: ATP synthase epsilon chain, chloroplastic (131 aa).

The protein belongs to the ATPase epsilon chain family. F-type ATPases have 2 components, CF(1) - the catalytic core - and CF(0) - the membrane proton channel. CF(1) has five subunits: alpha(3), beta(3), gamma(1), delta(1), epsilon(1). CF(0) has three main subunits: a, b and c.

Its subcellular location is the plastid. The protein localises to the chloroplast thylakoid membrane. Produces ATP from ADP in the presence of a proton gradient across the membrane. This chain is ATP synthase epsilon chain, chloroplastic, found in Cyanidioschyzon merolae (strain NIES-3377 / 10D) (Unicellular red alga).